A 199-amino-acid chain; its full sequence is Chaperone protein TorD (199 aa).

It belongs to the TorD/DmsD family. TorD subfamily.

The protein resides in the cytoplasm. Its function is as follows. Involved in the biogenesis of TorA. Acts on TorA before the insertion of the molybdenum cofactor and, as a result, probably favors a conformation of the apoenzyme that is competent for acquiring the cofactor. The sequence is that of Chaperone protein TorD from Escherichia coli O81 (strain ED1a).